A 277-amino-acid polypeptide reads, in one-letter code: Serine protease 33 (277 aa).

The N-terminal stretch at 1-24 (MRGASHLQILLLLVLGTRMQECAA) is a signal peptide. Residues 34 to 276 (IVGGRDAQDG…YSPWIQARLS (243 aa)) form the Peptidase S1 domain. Cysteine 59 and cysteine 75 form a disulfide bridge. Residues histidine 74 and aspartate 123 each act as charge relay system in the active site. 3 disulfides stabilise this stretch: cysteine 157/cysteine 234, cysteine 190/cysteine 213, and cysteine 224/cysteine 252. Serine 228 functions as the Charge relay system in the catalytic mechanism.

Belongs to the peptidase S1 family. Post-translationally, not glycosylated. In terms of tissue distribution, widely expressed.

It localises to the secreted. Functionally, serine protease that has amidolytic activity, cleaving its substrates before Arg residues. The sequence is that of Serine protease 33 (Prss33) from Mus musculus (Mouse).